The primary structure comprises 139 residues: Putative nickel-responsive regulator (139 aa).

Ni(2+) is bound by residues His-79, His-90, His-92, and Cys-98.

The protein belongs to the transcriptional regulatory CopG/NikR family. Ni(2+) is required as a cofactor.

Functionally, transcriptional regulator. In Solidesulfovibrio magneticus (strain ATCC 700980 / DSM 13731 / RS-1) (Desulfovibrio magneticus), this protein is Putative nickel-responsive regulator.